Consider the following 313-residue polypeptide: Expansin-like A4 (313 aa).

An N-terminal signal peptide occupies residues 1–30; that stretch reads MDDNGDVHFCHRATAVVALLLLHLVVVANA. The Expansin-like EG45 domain occupies 59–173; the sequence is GGACGFGAAP…RRIPCEYRES (115 aa). N124 carries an N-linked (GlcNAc...) asparagine glycan. In terms of domain architecture, Expansin-like CBD spans 188–281; sequence THLAIRFLYQ…DWRPGEVYDT (94 aa).

The protein belongs to the expansin family. Expansin-like A subfamily.

The protein localises to the secreted. The polypeptide is Expansin-like A4 (EXLA4) (Oryza sativa subsp. japonica (Rice)).